Consider the following 289-residue polypeptide: Shikimate dehydrogenase (NADP(+)) (289 aa).

Residues 22–24 and Thr-69 each bind shikimate; that span reads SRS. The active-site Proton acceptor is the Lys-73. Glu-85 lines the NADP(+) pocket. Asn-94 and Asp-109 together coordinate shikimate. NADP(+) is bound by residues 134–138, 158–163, and Ile-226; these read GAGGA and NRTLSR. Tyr-228 is a binding site for shikimate. Gly-249 serves as a coordination point for NADP(+).

Belongs to the shikimate dehydrogenase family. In terms of assembly, homodimer.

It carries out the reaction shikimate + NADP(+) = 3-dehydroshikimate + NADPH + H(+). Its pathway is metabolic intermediate biosynthesis; chorismate biosynthesis; chorismate from D-erythrose 4-phosphate and phosphoenolpyruvate: step 4/7. Functionally, involved in the biosynthesis of the chorismate, which leads to the biosynthesis of aromatic amino acids. Catalyzes the reversible NADPH linked reduction of 3-dehydroshikimate (DHSA) to yield shikimate (SA). The chain is Shikimate dehydrogenase (NADP(+)) from Brucella abortus (strain S19).